The following is a 495-amino-acid chain: Glycerol kinase (495 aa).

Position 16 (Thr16) interacts with ADP. ATP-binding residues include Thr16 and Thr17. Thr16 provides a ligand contact to sn-glycerol 3-phosphate. Arg20 is an ADP binding site. Arg86, Glu87, Tyr138, and Asp246 together coordinate sn-glycerol 3-phosphate. Glycerol is bound by residues Arg86, Glu87, Tyr138, Asp246, and Gln247. Residues Thr268 and Gly316 each coordinate ADP. ATP contacts are provided by Thr268, Gly316, Gln320, and Gly417. ADP contacts are provided by Gly417 and Asn421.

The protein belongs to the FGGY kinase family.

It carries out the reaction glycerol + ATP = sn-glycerol 3-phosphate + ADP + H(+). It participates in polyol metabolism; glycerol degradation via glycerol kinase pathway; sn-glycerol 3-phosphate from glycerol: step 1/1. With respect to regulation, inhibited by fructose 1,6-bisphosphate (FBP). Key enzyme in the regulation of glycerol uptake and metabolism. Catalyzes the phosphorylation of glycerol to yield sn-glycerol 3-phosphate. This Synechocystis sp. (strain ATCC 27184 / PCC 6803 / Kazusa) protein is Glycerol kinase.